Consider the following 220-residue polypeptide: Orotidine 5'-phosphate decarboxylase (220 aa).

Substrate contacts are provided by residues aspartate 12, lysine 34, 60–69, serine 117, 170–180, glycine 193, and arginine 194; these read DFKVADIPNT and PGVGAQGGKAS. Lysine 62 serves as the catalytic Proton donor.

The protein belongs to the OMP decarboxylase family. Type 1 subfamily. In terms of assembly, homodimer.

The enzyme catalyses orotidine 5'-phosphate + H(+) = UMP + CO2. It functions in the pathway pyrimidine metabolism; UMP biosynthesis via de novo pathway; UMP from orotate: step 2/2. Its function is as follows. Catalyzes the decarboxylation of orotidine 5'-monophosphate (OMP) to uridine 5'-monophosphate (UMP). The chain is Orotidine 5'-phosphate decarboxylase from Methanosarcina mazei (strain ATCC BAA-159 / DSM 3647 / Goe1 / Go1 / JCM 11833 / OCM 88) (Methanosarcina frisia).